Here is a 158-residue protein sequence, read N- to C-terminus: 6,7-dimethyl-8-ribityllumazine synthase (158 aa).

5-amino-6-(D-ribitylamino)uracil contacts are provided by residues Phe-23, 61 to 63 (SFE), and 85 to 87 (AVI). A (2S)-2-hydroxy-3-oxobutyl phosphate-binding site is contributed by 90–91 (DT). His-93 (proton donor) is an active-site residue. Residue Phe-118 participates in 5-amino-6-(D-ribitylamino)uracil binding. Arg-132 provides a ligand contact to (2S)-2-hydroxy-3-oxobutyl phosphate.

Belongs to the DMRL synthase family.

The catalysed reaction is (2S)-2-hydroxy-3-oxobutyl phosphate + 5-amino-6-(D-ribitylamino)uracil = 6,7-dimethyl-8-(1-D-ribityl)lumazine + phosphate + 2 H2O + H(+). It participates in cofactor biosynthesis; riboflavin biosynthesis; riboflavin from 2-hydroxy-3-oxobutyl phosphate and 5-amino-6-(D-ribitylamino)uracil: step 1/2. Functionally, catalyzes the formation of 6,7-dimethyl-8-ribityllumazine by condensation of 5-amino-6-(D-ribitylamino)uracil with 3,4-dihydroxy-2-butanone 4-phosphate. This is the penultimate step in the biosynthesis of riboflavin. In Prochlorococcus marinus (strain NATL2A), this protein is 6,7-dimethyl-8-ribityllumazine synthase.